A 91-amino-acid chain; its full sequence is Acylphosphatase (91 aa).

An Acylphosphatase-like domain is found at 5–91 (RLTAWVRGHV…RGSFTGFEER (87 aa)). Catalysis depends on residues arginine 20 and asparagine 38.

This sequence belongs to the acylphosphatase family.

It catalyses the reaction an acyl phosphate + H2O = a carboxylate + phosphate + H(+). The protein is Acylphosphatase (acyP) of Thermobifida fusca (strain YX).